Here is a 378-residue protein sequence, read N- to C-terminus: MLPLSIKDDEYKPPKFNLFGKISGWFRSILSDKTSRNLFFFLCLNLSFAFVELLYGIWSNCLGLISDSFHMFFDSTAILAGLAASVISKWRDNDAFSYGYVRAEVLAGFVNGLFLIFTAFFIFSEGVERALAPPDVHHERLLLVSILGFVVNLVGIFVFNHGGHGHSHGSGHGHSHSLFNGALDHSHGHEDHCHSHEAKHGAAHSHDHDHAHGHGHLHSHDGPSFKATAGPSRQILQGVFLHILADTLGSIGVIASAIMMQNFGLMIADPICSILIAILIVVSVIPLLRESVGILMQRTPPSLENTLPQCYQRVQQLQGVYNLQEQHFWTLCSDVYVGTLKLVVAPDADARWILSQTHNIFTQAGVRQLYVQIDFAAM.

Residues 1–37 (MLPLSIKDDEYKPPKFNLFGKISGWFRSILSDKTSRN) lie on the Cytoplasmic side of the membrane. A helical membrane pass occupies residues 38 to 58 (LFFFLCLNLSFAFVELLYGIW). Topologically, residues 59–67 (SNCLGLISD) are lumenal. The chain crosses the membrane as a helical span at residues 68–88 (SFHMFFDSTAILAGLAASVIS). The Cytoplasmic portion of the chain corresponds to 89–102 (KWRDNDAFSYGYVR). Residues 103–123 (AEVLAGFVNGLFLIFTAFFIF) traverse the membrane as a helical segment. At 124 to 140 (SEGVERALAPPDVHHER) the chain is on the lumenal side. A helical transmembrane segment spans residues 141-161 (LLLVSILGFVVNLVGIFVFNH). The segment at 161 to 220 (HGGHGHSHGSGHGHSHSLFNGALDHSHGHEDHCHSHEAKHGAAHSHDHDHAHGHGHLHSH) is his-rich loop. Residues 162–238 (GGHGHSHGSG…AGPSRQILQG (77 aa)) are Cytoplasmic-facing. Basic and acidic residues predominate over residues 186–223 (SHGHEDHCHSHEAKHGAAHSHDHDHAHGHGHLHSHDGP). The disordered stretch occupies residues 186–224 (SHGHEDHCHSHEAKHGAAHSHDHDHAHGHGHLHSHDGPS). A helical transmembrane segment spans residues 239–259 (VFLHILADTLGSIGVIASAIM). Topologically, residues 260-264 (MQNFG) are lumenal. The helical transmembrane segment at 265–285 (LMIADPICSILIAILIVVSVI) threads the bilayer. Residues 286–378 (PLLRESVGIL…LYVQIDFAAM (93 aa)) lie on the Cytoplasmic side of the membrane.

The protein belongs to the cation diffusion facilitator (CDF) transporter (TC 2.A.4) family. SLC30A subfamily. As to quaternary structure, homooligomer. In terms of tissue distribution, highly expressed in liver, spleen, duodenum and part of the jejunum of small intestine (at protein level). Moderately expressed in kidney, lung, and brain. Barely detectable in heart. In brain, expressed in cerebellum, cerebral cortex and hippocampus (at protein level).

The protein localises to the golgi apparatus membrane. It is found in the cytoplasmic vesicle. It localises to the golgi apparatus. The protein resides in the trans-Golgi network. Its subcellular location is the sarcoplasmic reticulum. The protein localises to the mitochondrion. It carries out the reaction Zn(2+)(in) = Zn(2+)(out). In terms of biological role, zinc ion transporter mediating zinc entry from the cytosol into the lumen of organelles along the secretory pathway. By contributing to zinc ion homeostasis within the early secretory pathway, regulates the activation and folding of enzymes like alkaline phosphatases. This is Zinc transporter 7 from Mus musculus (Mouse).